A 449-amino-acid chain; its full sequence is Phosphoglucosamine mutase (449 aa).

S104 (phosphoserine intermediate) is an active-site residue. The Mg(2+) site is built by S104, D243, D245, and D247. Position 104 is a phosphoserine (S104).

Belongs to the phosphohexose mutase family. It depends on Mg(2+) as a cofactor. Post-translationally, activated by phosphorylation.

The catalysed reaction is alpha-D-glucosamine 1-phosphate = D-glucosamine 6-phosphate. In terms of biological role, catalyzes the conversion of glucosamine-6-phosphate to glucosamine-1-phosphate. This is Phosphoglucosamine mutase from Xanthomonas oryzae pv. oryzae (strain PXO99A).